The following is a 1115-amino-acid chain: Carbamoyl phosphate synthase large chain (1115 aa).

The carboxyphosphate synthetic domain stretch occupies residues 1–407; that stretch reads MPRRTDLHHV…ALGKVMRSLE (407 aa). ATP-binding residues include R134, R174, G180, G181, E213, I215, E220, G246, V247, H248, Q290, and E304. In terms of domain architecture, ATP-grasp 1 spans 138–333; the sequence is KDIVAKAGGE…IAKIAAKLAI (196 aa). The Mg(2+) site is built by Q290, E304, and N306. Q290, E304, and N306 together coordinate Mn(2+). The segment at 408-559 is oligomerization domain; sequence TTRAGFWTAP…ELDPAAETEV (152 aa). The carbamoyl phosphate synthetic domain stretch occupies residues 560-965; the sequence is APQTERPKVL…AFAKSQTAAY (406 aa). An ATP-grasp 2 domain is found at 693-884; that stretch reads GDLLSAAGLP…LAKACARIML (192 aa). ATP is bound by residues R729, R768, L770, E775, G800, I801, H802, S803, Q843, and E855. Residues Q843, E855, and N857 each coordinate Mg(2+). Q843, E855, and N857 together coordinate Mn(2+). The MGS-like domain occupies 966-1113; sequence GSLPAQGTVF…QELHRVIGGV (148 aa). The interval 966-1115 is allosteric domain; that stretch reads GSLPAQGTVF…LHRVIGGVER (150 aa).

Belongs to the CarB family. In terms of assembly, composed of two chains; the small (or glutamine) chain promotes the hydrolysis of glutamine to ammonia, which is used by the large (or ammonia) chain to synthesize carbamoyl phosphate. Tetramer of heterodimers (alpha,beta)4. Mg(2+) serves as cofactor. Mn(2+) is required as a cofactor.

It carries out the reaction hydrogencarbonate + L-glutamine + 2 ATP + H2O = carbamoyl phosphate + L-glutamate + 2 ADP + phosphate + 2 H(+). The enzyme catalyses hydrogencarbonate + NH4(+) + 2 ATP = carbamoyl phosphate + 2 ADP + phosphate + 2 H(+). It functions in the pathway amino-acid biosynthesis; L-arginine biosynthesis; carbamoyl phosphate from bicarbonate: step 1/1. The protein operates within pyrimidine metabolism; UMP biosynthesis via de novo pathway; (S)-dihydroorotate from bicarbonate: step 1/3. Its function is as follows. Large subunit of the glutamine-dependent carbamoyl phosphate synthetase (CPSase). CPSase catalyzes the formation of carbamoyl phosphate from the ammonia moiety of glutamine, carbonate, and phosphate donated by ATP, constituting the first step of 2 biosynthetic pathways, one leading to arginine and/or urea and the other to pyrimidine nucleotides. The large subunit (synthetase) binds the substrates ammonia (free or transferred from glutamine from the small subunit), hydrogencarbonate and ATP and carries out an ATP-coupled ligase reaction, activating hydrogencarbonate by forming carboxy phosphate which reacts with ammonia to form carbamoyl phosphate. This is Carbamoyl phosphate synthase large chain from Mycobacterium tuberculosis (strain CDC 1551 / Oshkosh).